The chain runs to 161 residues: Aklanonic acid methyl ester cyclase DauD (161 aa).

Gln-106 contributes to the substrate binding site. The interval Trp-137 to Pro-161 is disordered.

This sequence belongs to the polyketide cyclase DnrD family. Homotetramer.

The enzyme catalyses methyl aklanonate = aklaviketone. It participates in antibiotic biosynthesis; daunorubicin biosynthesis. The protein operates within antibiotic biosynthesis; carminomycin biosynthesis. Its pathway is antibiotic biosynthesis; rhodomycin biosynthesis. It functions in the pathway antibiotic biosynthesis; aclacinomycin biosynthesis. Its function is as follows. Involved in the biosynthesis of aklavinone which is an important precursor common to the formation of the clinically significant anthracyclines such as carminomycin, daunorubicin (daunomycin), rhodomycin, aclacinomycin T (aklavin) and aclacinomycin A (aclarubicin). These compounds are aromatic polyketide antibiotics that exhibit high cytotoxicity and are widely applied in the chemotherapy of a variety of cancers. Catalyzes the cyclization of aklanonic acid methyl ester to yield aklaviketone. This chain is Aklanonic acid methyl ester cyclase DauD (dauD), found in Streptomyces sp. (strain C5).